The sequence spans 86 residues: Testis-expressed protein 54 (86 aa).

Positions 1 to 34 are enriched in basic and acidic residues; it reads MGCCQDKNRWASDEQARDEVTEDGREGNEVDNSG. Disordered regions lie at residues 1 to 43 and 57 to 86; these read MGCC…SNES and SRRESSRSGKQDNQMQERKHEGSHKEPEKG.

Expressed in Testis.

This is Testis-expressed protein 54 from Mus musculus (Mouse).